A 447-amino-acid polypeptide reads, in one-letter code: Phosphoglucosamine mutase (447 aa).

Residue S108 is the Phosphoserine intermediate of the active site. Mg(2+)-binding residues include S108, D247, D249, and D251. Residue S108 is modified to Phosphoserine.

The protein belongs to the phosphohexose mutase family. It depends on Mg(2+) as a cofactor. Activated by phosphorylation.

It catalyses the reaction alpha-D-glucosamine 1-phosphate = D-glucosamine 6-phosphate. In terms of biological role, catalyzes the conversion of glucosamine-6-phosphate to glucosamine-1-phosphate. The chain is Phosphoglucosamine mutase from Bordetella avium (strain 197N).